The primary structure comprises 418 residues: Inner capsid protein sigma-2 (418 aa).

The protein belongs to the orthoreovirus sigma-1 protein family. As to quaternary structure, interacts with protein mu-NS; in viral inclusions.

It is found in the virion. Functionally, inner capsid (core) component. The sequence is that of Inner capsid protein sigma-2 (S2) from Reovirus type 3 (strain Dearing) (T3D).